The following is a 254-amino-acid chain: 3-deoxy-manno-octulosonate cytidylyltransferase (254 aa).

The protein belongs to the KdsB family.

Its subcellular location is the cytoplasm. The catalysed reaction is 3-deoxy-alpha-D-manno-oct-2-ulosonate + CTP = CMP-3-deoxy-beta-D-manno-octulosonate + diphosphate. Its pathway is nucleotide-sugar biosynthesis; CMP-3-deoxy-D-manno-octulosonate biosynthesis; CMP-3-deoxy-D-manno-octulosonate from 3-deoxy-D-manno-octulosonate and CTP: step 1/1. It participates in bacterial outer membrane biogenesis; lipopolysaccharide biosynthesis. Its function is as follows. Activates KDO (a required 8-carbon sugar) for incorporation into bacterial lipopolysaccharide in Gram-negative bacteria. This is 3-deoxy-manno-octulosonate cytidylyltransferase from Pseudomonas aeruginosa (strain LESB58).